A 268-amino-acid chain; its full sequence is Octanoyltransferase (268 aa).

The BPL/LPL catalytic domain occupies 73-261 (GEADELVWLL…AFEEVFGPAV (189 aa)). Substrate-binding positions include 112–119 (RGGEYTYH), 192–194 (ALG), and 205–207 (GLS). Cysteine 223 functions as the Acyl-thioester intermediate in the catalytic mechanism.

This sequence belongs to the LipB family.

The protein localises to the cytoplasm. The catalysed reaction is octanoyl-[ACP] + L-lysyl-[protein] = N(6)-octanoyl-L-lysyl-[protein] + holo-[ACP] + H(+). It functions in the pathway protein modification; protein lipoylation via endogenous pathway; protein N(6)-(lipoyl)lysine from octanoyl-[acyl-carrier-protein]: step 1/2. Functionally, catalyzes the transfer of endogenously produced octanoic acid from octanoyl-acyl-carrier-protein onto the lipoyl domains of lipoate-dependent enzymes. Lipoyl-ACP can also act as a substrate although octanoyl-ACP is likely to be the physiological substrate. This chain is Octanoyltransferase, found in Agrobacterium fabrum (strain C58 / ATCC 33970) (Agrobacterium tumefaciens (strain C58)).